A 427-amino-acid chain; its full sequence is Serine hydroxymethyltransferase (427 aa).

120-122 lines the (6S)-5,6,7,8-tetrahydrofolate pocket; that stretch reads GHI. Lysine 226 carries the post-translational modification N6-(pyridoxal phosphate)lysine.

The protein belongs to the SHMT family. As to quaternary structure, homodimer. Pyridoxal 5'-phosphate is required as a cofactor.

It localises to the cytoplasm. The protein operates within amino-acid biosynthesis; glycine biosynthesis; glycine from L-serine: step 1/1. Its function is as follows. Catalyzes the reversible interconversion of serine and glycine with a modified folate serving as the one-carbon carrier. Also exhibits a pteridine-independent aldolase activity toward beta-hydroxyamino acids, producing glycine and aldehydes, via a retro-aldol mechanism. In Pyrococcus abyssi (strain GE5 / Orsay), this protein is Serine hydroxymethyltransferase.